The primary structure comprises 422 residues: Zinc finger protein Gfi-1 (422 aa).

The tract at residues 1–20 (MPRSFLVKSKKAHSYHQPRS) is SNAG domain. The segment at 1 to 107 (MPRSFLVKSK…SPASEKSVCP (107 aa)) is disordered. Residue S20 is modified to Phosphoserine. Residues 34 to 47 (APGGADGTSSAGGA) show a composition bias toward low complexity. At S56 the chain carries Phosphoserine. Residues 57–72 (PESQLTEAPDRSSASP) are compositionally biased toward polar residues. Residues 140 to 257 (RPCAALDRGA…LLLGGGSYKC (118 aa)) form a required for interaction with RELA region. 6 consecutive C2H2-type zinc fingers follow at residues 255–278 (YKCI…RRSH), 284–306 (FACE…KAVH), 312–334 (FDCK…LLIH), 340–362 (YPCQ…TFIH), 368–390 (HKCQ…SRKH), and 396–419 (FGCD…ETQH).

Interacts with U2AF1L4. Component of RCOR-GFI-KDM1A-HDAC complexes. Interacts directly with RCOR1, KDM1A and HDAC2. Also interacts with HDAC1 and HDAC3. Interacts (via the zinc-finger domain) with ARIH2; the interaction prevents GFI1 ubiquitination and proteasomal degradation. Interacts with PIAS3; the interaction relieves the inhibitory effect of PIAS3 on STAT3-mediated transcriptional activity. Forms a complex with EHMT2 and HDAC1 to promote 'Lys-9' dimethylation of H3 (H3K9Me2) and repress expression of target genes. Interacts directly with EHMT2. Component of the GFI1-AJUBA-HDAC1 repressor complex. Interacts directly with AJUBA (via ITS LIM domains); the interaction results in the HDAC-dependent corepression of a subset of GFI1 target genes and, occurs independently of the SNAG domain. Interacts with SPI1; the interaction inhibits SPI1 transcriptional activity targeted at macrophage-specific genes, repressing macrophage differentiation of myeloid progenitor cells and promoting granulocyte commitment. Interacts with RUNX1T1; the interaction represses HDAC-mediated transcriptional activity. Interacts with RELA; the interaction occurs on liposaccharide (LPS) stimulation and controls RELA DNA binding activity and regulates endotoxin-mediated TOLL-like receptor inflammatory response. Interacts (via the C-terminal zinc fingers) with ZBTB17; the interaction results in the recruitment of GFI1 to the CDKN1A/p21 and CDKNIB promoters and repression of transcription. Ubiquitinated.

Its subcellular location is the nucleus. Transcription repressor essential for hematopoiesis. Functions in a cell-context and development-specific manner. Binds to 5'-TAAATCAC[AT]GCA-3' in the promoter region of a large number of genes. Component of several complexes, including the EHMT2-GFI1-HDAC1, AJUBA-GFI1-HDAC1 and RCOR-GFI-KDM1A-HDAC complexes, that suppress, via histone deacetylase (HDAC) recruitment, a number of genes implicated in multilineage blood cell development. Regulates neutrophil differentiation, promotes proliferation of lymphoid cells, and is required for granulocyte development. Inhibits SPI1 transcriptional activity at macrophage-specific genes, repressing macrophage differentiation of myeloid progenitor cells and promoting granulocyte commitment. Mediates, together with U2AF1L4, the alternative splicing of CD45 and controls T-cell receptor signaling. Regulates the endotoxin-mediated Toll-like receptor (TLR) inflammatory response by antagonizing RELA. Cooperates with CBFA2T2 to regulate ITGB1-dependent neurite growth. Controls cell-cycle progression by repressing CDKNIA/p21 transcription in response to TGFB1 via recruitment of GFI1 by ZBTB17 to the CDKNIA/p21 and CDKNIB promoters. Required for the maintenance of inner ear hair cells. In addition to its role in transcription, acts as a substrate adapter for PRMT1 in the DNA damage response: facilitates the recognition of TP53BP1 and MRE11 substrates by PRMT1, promoting their methylation and the DNA damage response. The sequence is that of Zinc finger protein Gfi-1 (GFI1) from Canis lupus familiaris (Dog).